The primary structure comprises 62 residues: Potassium channel toxin alpha-KTx Tx308 (62 aa).

Positions 1-18 (MQKLFIVLLLFCILRLDA) are cleaved as a signal peptide. Disulfide bonds link cysteine 28–cysteine 46, cysteine 33–cysteine 59, and cysteine 37–cysteine 61.

Belongs to the short scorpion toxin superfamily. Potassium channel inhibitor family. Alpha-KTx 23 subfamily. As to expression, expressed by the venom gland.

Its subcellular location is the secreted. Its function is as follows. May block potassium channels. In Buthus israelis (Israeli scorpion), this protein is Potassium channel toxin alpha-KTx Tx308.